Consider the following 130-residue polypeptide: MVESIARVRHIRVTPQKARRVVDMIRGKQAEEALAILKFAPQGASEPIYKLVASAMANARVKADASNSFLAEQDLYIAKAFVDEGTTLKRFQPRAQGRAFRINKRTSHITVVLATPDEADVATTAKKASK.

Belongs to the universal ribosomal protein uL22 family. Part of the 50S ribosomal subunit.

In terms of biological role, this protein binds specifically to 23S rRNA; its binding is stimulated by other ribosomal proteins, e.g. L4, L17, and L20. It is important during the early stages of 50S assembly. It makes multiple contacts with different domains of the 23S rRNA in the assembled 50S subunit and ribosome. Functionally, the globular domain of the protein is located near the polypeptide exit tunnel on the outside of the subunit, while an extended beta-hairpin is found that lines the wall of the exit tunnel in the center of the 70S ribosome. The chain is Large ribosomal subunit protein uL22 from Clavibacter sepedonicus (Clavibacter michiganensis subsp. sepedonicus).